The chain runs to 159 residues: Putative ribosomal RNA large subunit methyltransferase H (159 aa).

Residues L76, G108, and F127–F132 each bind S-adenosyl-L-methionine.

It belongs to the RNA methyltransferase RlmH family.

It is found in the cytoplasm. The catalysed reaction is pseudouridine(1915) in 23S rRNA + S-adenosyl-L-methionine = N(3)-methylpseudouridine(1915) in 23S rRNA + S-adenosyl-L-homocysteine + H(+). Functionally, specifically methylates the pseudouridine at position 1915 (m3Psi1915) in 23S rRNA. The chain is Putative ribosomal RNA large subunit methyltransferase H from Methanococcus maripaludis (strain C5 / ATCC BAA-1333).